A 334-amino-acid chain; its full sequence is Glyceraldehyde-3-phosphate dehydrogenase (334 aa).

NAD(+)-binding positions include 11-12, aspartate 33, and serine 119; that span reads RI. D-glyceraldehyde 3-phosphate-binding positions include 149–151 and threonine 180; that span reads SCT. Cysteine 150 acts as the Nucleophile in catalysis. NAD(+) is bound at residue asparagine 181. Residues arginine 197, 210–211, and arginine 233 each bind D-glyceraldehyde 3-phosphate; that span reads TG. An NAD(+)-binding site is contributed by asparagine 314.

The protein belongs to the glyceraldehyde-3-phosphate dehydrogenase family. Homotetramer.

Its subcellular location is the cytoplasm. The enzyme catalyses D-glyceraldehyde 3-phosphate + phosphate + NAD(+) = (2R)-3-phospho-glyceroyl phosphate + NADH + H(+). Its pathway is carbohydrate degradation; glycolysis; pyruvate from D-glyceraldehyde 3-phosphate: step 1/5. Catalyzes the oxidative phosphorylation of glyceraldehyde 3-phosphate (G3P) to 1,3-bisphosphoglycerate (BPG) using the cofactor NAD. The first reaction step involves the formation of a hemiacetal intermediate between G3P and a cysteine residue, and this hemiacetal intermediate is then oxidized to a thioester, with concomitant reduction of NAD to NADH. The reduced NADH is then exchanged with the second NAD, and the thioester is attacked by a nucleophilic inorganic phosphate to produce BPG. The sequence is that of Glyceraldehyde-3-phosphate dehydrogenase (gap) from Clostridium pasteurianum.